Reading from the N-terminus, the 528-residue chain is Na(+)/H(+) antiporter NhaB (528 aa).

The next 11 helical transmembrane spans lie at 10–30 (IGNF…SFLI), 63–83 (YPLQ…MTSA), 96–116 (VLLL…LLLF), 131–165 (VSLM…FYAI), 204–224 (LLMH…VGEP), 240–260 (FVVR…LTCL), 305–325 (VLVG…VGLV), 359–379 (LAVF…APVI), 391–411 (LVIF…VFVG), 449–469 (ATPN…APLI), and 476–496 (MVWM…LAIE).

It belongs to the NhaB Na(+)/H(+) (TC 2.A.34) antiporter family.

Its subcellular location is the cell inner membrane. The enzyme catalyses 2 Na(+)(in) + 3 H(+)(out) = 2 Na(+)(out) + 3 H(+)(in). Na(+)/H(+) antiporter that extrudes sodium in exchange for external protons. This is Na(+)/H(+) antiporter NhaB from Shewanella sp. (strain W3-18-1).